Here is a 909-residue protein sequence, read N- to C-terminus: SCY1-like protein 2 B (909 aa).

The 305-residue stretch at 39-343 folds into the Protein kinase domain; the sequence is YELLDQIGSA…ALDFTGSNFF (305 aa). HEAT repeat units follow at residues 311 to 348, 350 to 382, 383 to 401, 402 to 439, 465 to 502, 499 to 537, and 578 to 617; these read SIPS…SDAR, RALR…DFDS, RVLR…RNLV, LQPI…TASG, VLPL…VVRQ, VVRQ…TLDK, and FTAE…KIEE. 2 disordered regions span residues 624 to 772 and 804 to 909; these read NDSG…VAST and SASL…LDLL. 5 stretches are compositionally biased toward polar residues: residues 638-648, 678-712, 724-747, 804-828, and 835-852; these read NGLQFQSSTQI, PASS…TAPT, RQSS…TSFA, SASL…QDPL, and KQSQ…NNQK.

This sequence belongs to the protein kinase superfamily. As to quaternary structure, interacts with VTI11, VTI12 and CHC1. Expressed in roots, seedlings, leaves, stems, flowers, and, at low levels, in siliques.

The protein localises to the golgi apparatus membrane. Its subcellular location is the golgi apparatus. The protein resides in the trans-Golgi network membrane. It localises to the prevacuolar compartment membrane. Functionally, probably inactive kinase. Component of the AP2-containing clathrin coat that regulates clathrin-dependent trafficking at plasma membrane, TGN and endosomal system. Together with SCYL2B, required for cell growth, plant growth and development. Essential for polarized root hair development probably by mediating the root hair tip localization of cellulose synthase-like D3 (CSLD3). The polypeptide is SCY1-like protein 2 B (Arabidopsis thaliana (Mouse-ear cress)).